A 779-amino-acid polypeptide reads, in one-letter code: Probable ATP-dependent RNA helicase DHX40 (779 aa).

Residues 1-53 are disordered; it reads MSRFPAVAGRAPRRQEEGERSRDLQEERPSAVCIADREEKGCTSQEGGTTPTF. The segment covering 13–41 has biased composition (basic and acidic residues); that stretch reads RRQEEGERSRDLQEERPSAVCIADREEKG. The segment covering 42–53 has biased composition (polar residues); sequence CTSQEGGTTPTF. A Helicase ATP-binding domain is found at 63 to 231; the sequence is IQAVRDNSFL…FGNCPIFDIP (169 aa). 76-83 contacts ATP; that stretch reads GNTGSGKT. The short motif at 173–176 is the DEAH box element; sequence DEAH. Residues 263 to 442 enclose the Helicase C-terminal domain; sequence TMDIHLNEMA…SVVLTLKCLA (180 aa). A disordered region spans residues 737-779; it reads SKDVLKKMQRRNDDKSISDARARFLERKQQRTQDHSDTRKETG.

Belongs to the DEAD box helicase family. DEAH subfamily.

The catalysed reaction is ATP + H2O = ADP + phosphate + H(+). In terms of biological role, probable ATP-dependent RNA helicase. The chain is Probable ATP-dependent RNA helicase DHX40 (DHX40) from Pongo abelii (Sumatran orangutan).